The chain runs to 271 residues: Tritrans,polycis-undecaprenyl-diphosphate synthase (geranylgeranyl-diphosphate specific) (271 aa).

Asp50 is an active-site residue. Position 50 (Asp50) interacts with Mg(2+). Residues 51–54 (GNRR), Phe55, His67, and 95–97 (STE) contribute to the substrate site. Catalysis depends on Asn98, which acts as the Proton acceptor. Substrate contacts are provided by residues Arg101, Arg220, and 226–228 (RLS). A Mg(2+)-binding site is contributed by Glu239.

This sequence belongs to the UPP synthase family. As to quaternary structure, homodimer. It depends on Mg(2+) as a cofactor.

The enzyme catalyses geranylgeranyl diphosphate + 7 isopentenyl diphosphate = tri-trans,hepta-cis-undecaprenyl diphosphate + 7 diphosphate. In terms of biological role, catalyzes the sequential condensation of isopentenyl diphosphate (IPP) with geranylgeranyl diphosphate (GGPP) to yield (2Z,6Z,10Z,14Z,18Z,22Z,26Z,30E,34E,38E)-undecaprenyl diphosphate (tritrans,heptacis-UPP). It is probably the precursor of glycosyl carrier lipids. In Methanopyrus kandleri (strain AV19 / DSM 6324 / JCM 9639 / NBRC 100938), this protein is Tritrans,polycis-undecaprenyl-diphosphate synthase (geranylgeranyl-diphosphate specific).